We begin with the raw amino-acid sequence, 707 residues long: Toxin RTX-I translocation ATP-binding protein (707 aa).

The Peptidase C39 domain occupies 1–125 (MDFYREEDYG…SLYQGKLILV (125 aa)). Residue His-83 is part of the active site. Residues 154 to 436 (FIETLIVSIF…LAQLWQDFQQ (283 aa)) enclose the ABC transmembrane type-1 domain. 5 consecutive transmembrane segments (helical) span residues 158–178 (LIVS…FQVV), 188–208 (FSTL…EIVL), 295–315 (LVIL…SPIL), 387–407 (VVMV…DLSI), and 410–430 (LIAF…LAQL). In terms of domain architecture, ABC transporter spans 468–703 (ITFRNIRFRY…PNGLYHYLHQ (236 aa)). Position 502–509 (502–509 (GRSGSGKS)) interacts with ATP.

Belongs to the ABC transporter superfamily. Protein-1 exporter (TC 3.A.1.109) family. Homodimer.

It localises to the cell membrane. In terms of biological role, involved in the transport of the toxin RTX-I as well as that of RTX-II. The sequence is that of Toxin RTX-I translocation ATP-binding protein (apxIB) from Actinobacillus pleuropneumoniae (Haemophilus pleuropneumoniae).